The sequence spans 143 residues: Large ribosomal subunit protein uL11 (143 aa).

Belongs to the universal ribosomal protein uL11 family. Part of the ribosomal stalk of the 50S ribosomal subunit. Interacts with L10 and the large rRNA to form the base of the stalk. L10 forms an elongated spine to which L12 dimers bind in a sequential fashion forming a multimeric L10(L12)X complex. One or more lysine residues are methylated.

Functionally, forms part of the ribosomal stalk which helps the ribosome interact with GTP-bound translation factors. The polypeptide is Large ribosomal subunit protein uL11 (Ectopseudomonas mendocina (strain ymp) (Pseudomonas mendocina)).